A 342-amino-acid polypeptide reads, in one-letter code: Ribosomal RNA small subunit methyltransferase C (342 aa).

The protein belongs to the methyltransferase superfamily. RsmC family. As to quaternary structure, monomer.

The protein localises to the cytoplasm. It catalyses the reaction guanosine(1207) in 16S rRNA + S-adenosyl-L-methionine = N(2)-methylguanosine(1207) in 16S rRNA + S-adenosyl-L-homocysteine + H(+). In terms of biological role, specifically methylates the guanine in position 1207 of 16S rRNA in the 30S particle. This chain is Ribosomal RNA small subunit methyltransferase C, found in Hahella chejuensis (strain KCTC 2396).